The sequence spans 111 residues: PCNA-associated factor (111 aa).

Residues 1 to 10 (MVRTKANSVP) show a composition bias toward polar residues. The tract at residues 1 to 111 (MVRTKANSVP…PPDHTDDEKE (111 aa)) is disordered. Position 8 is a phosphoserine (S8). K15 is covalently cross-linked (Glycyl lysine isopeptide (Lys-Gly) (interchain with G-Cter in ubiquitin)). The short motif at 23 to 34 (RKVLGSSTSAAN) is the D-box element. At K24 the chain carries N6-acetyllysine; alternate. Residue K24 forms a Glycyl lysine isopeptide (Lys-Gly) (interchain with G-Cter in ubiquitin); alternate linkage. Residues 27–39 (GSSTSAANSTPLS) show a composition bias toward polar residues. 3 positions are modified to phosphoserine: S28, S31, and S72. The short motif at 62–72 (QKGIGEFFSLS) is the PIP-box element. Over residues 74–84 (KDSEKENRIPE) the composition is skewed to basic and acidic residues. A KEN box motif is present at residues 78-80 (KEN). The short motif at 85–97 (EAGSSGLGKAKRK) is the Initiation motif element.

As to quaternary structure, interacts (when monoubiquitinated at Lys-15 and Lys-24) with PCNA. Interacts with isoform 2/p33ING1b of ING1. Interacts with BRCA1. Monoubiquitinated at Lys-15 and Lys-24 during normal S phase, promoting its association with PCNA. Also diubiquitinated at these 2 sites. Following DNA damage, monoubiquitin chains at Lys-15 and Lys-24 are probably extended, leading to disrupt the interaction with PCNA. Polyubiquitinated by the APC/C complex at the mitotic exit, leading to its degradation by the proteasome.

It localises to the nucleus. It is found in the cytoplasm. The protein localises to the perinuclear region. Functionally, PCNA-binding protein that acts as a regulator of DNA repair during DNA replication. Following DNA damage, the interaction with PCNA is disrupted, facilitating the interaction between monoubiquitinated PCNA and the translesion DNA synthesis DNA polymerase eta (POLH) at stalled replisomes, facilitating the bypass of replication-fork-blocking lesions. Also acts as a regulator of centrosome number. The sequence is that of PCNA-associated factor from Bos taurus (Bovine).